A 557-amino-acid chain; its full sequence is 2-succinyl-5-enolpyruvyl-6-hydroxy-3-cyclohexene-1-carboxylate synthase (557 aa).

The protein belongs to the TPP enzyme family. MenD subfamily. As to quaternary structure, homodimer. Mg(2+) is required as a cofactor. It depends on Mn(2+) as a cofactor. The cofactor is thiamine diphosphate.

It catalyses the reaction isochorismate + 2-oxoglutarate + H(+) = 5-enolpyruvoyl-6-hydroxy-2-succinyl-cyclohex-3-ene-1-carboxylate + CO2. The protein operates within quinol/quinone metabolism; 1,4-dihydroxy-2-naphthoate biosynthesis; 1,4-dihydroxy-2-naphthoate from chorismate: step 2/7. It participates in quinol/quinone metabolism; menaquinone biosynthesis. Catalyzes the thiamine diphosphate-dependent decarboxylation of 2-oxoglutarate and the subsequent addition of the resulting succinic semialdehyde-thiamine pyrophosphate anion to isochorismate to yield 2-succinyl-5-enolpyruvyl-6-hydroxy-3-cyclohexene-1-carboxylate (SEPHCHC). The sequence is that of 2-succinyl-5-enolpyruvyl-6-hydroxy-3-cyclohexene-1-carboxylate synthase from Serratia proteamaculans (strain 568).